Here is a 259-residue protein sequence, read N- to C-terminus: Small ribosomal subunit protein eS1 (259 aa).

The segment covering 1-18 has biased composition (basic residues); the sequence is MAVGKNKRISKGKKGGKK. A disordered region spans residues 1 to 22; sequence MAVGKNKRISKGKKGGKKKASD.

It belongs to the eukaryotic ribosomal protein eS1 family. Component of the small ribosomal subunit. Mature ribosomes consist of a small (40S) and a large (60S) subunit. The 40S subunit contains about 33 different proteins and 1 molecule of RNA (18S). The 60S subunit contains about 49 different proteins and 3 molecules of RNA (25S, 5.8S and 5S).

The protein resides in the cytoplasm. The polypeptide is Small ribosomal subunit protein eS1 (Chlamydomonas reinhardtii (Chlamydomonas smithii)).